The primary structure comprises 501 residues: ATP synthase subunit alpha (501 aa).

Position 169–176 (169–176 (GDRQTGKT)) interacts with ATP.

It belongs to the ATPase alpha/beta chains family. As to quaternary structure, F-type ATPases have 2 components, CF(1) - the catalytic core - and CF(0) - the membrane proton channel. CF(1) has five subunits: alpha(3), beta(3), gamma(1), delta(1), epsilon(1). CF(0) has three main subunits: a(1), b(2) and c(9-12). The alpha and beta chains form an alternating ring which encloses part of the gamma chain. CF(1) is attached to CF(0) by a central stalk formed by the gamma and epsilon chains, while a peripheral stalk is formed by the delta and b chains.

The protein resides in the cell membrane. The catalysed reaction is ATP + H2O + 4 H(+)(in) = ADP + phosphate + 5 H(+)(out). Its function is as follows. Produces ATP from ADP in the presence of a proton gradient across the membrane. The alpha chain is a regulatory subunit. This chain is ATP synthase subunit alpha, found in Streptococcus pneumoniae (strain Hungary19A-6).